A 247-amino-acid chain; its full sequence is Uridylate kinase (247 aa).

Residue 15–18 (KLSG) participates in ATP binding. The segment at 23–28 (GDEGFG) is involved in allosteric activation by GTP. Glycine 57 serves as a coordination point for UMP. ATP is bound by residues glycine 58 and arginine 62. UMP is bound by residues aspartate 77 and 138–145 (TGNPFFTT). The ATP site is built by threonine 165, tyrosine 171, and aspartate 174.

This sequence belongs to the UMP kinase family. As to quaternary structure, homohexamer.

The protein resides in the cytoplasm. It catalyses the reaction UMP + ATP = UDP + ADP. The protein operates within pyrimidine metabolism; CTP biosynthesis via de novo pathway; UDP from UMP (UMPK route): step 1/1. Allosterically activated by GTP. Inhibited by UTP. Its function is as follows. Catalyzes the reversible phosphorylation of UMP to UDP. This chain is Uridylate kinase, found in Saccharophagus degradans (strain 2-40 / ATCC 43961 / DSM 17024).